The sequence spans 664 residues: MLHIRSWTLPKSSCSTLIWNRGFSKAPVLQVAKVIAVQDKKINLDREKHIQRIQERIEKIPISNYRNFSIVAHVDHGKSTLSDRLLELTGVIQPGAANKQVLDKLDVERERGITIKAQTCTMFYHDTNTKEDYLLHLVDTPGHVDFRAEVSRSYASCGGALLLVDAAQGVQAQTVANFYLAYSMGLKLIPIINKIDLDAADIPRAMDQVETTFELNREDCIPVSAKTGLNVENIIPSIINNIPPPQGDINKPLKALLVDSWHDPYVGVVMLVHIVDGKMKKGMKLLSAHTSKKYEVKEVGVMYPDKTPMDVLRAGQVGYIIPGMKNPREALIGDTFFQNGQHENLEPLPGFEEPKPMVFVGAFPADGGEFKVMNDHMENLVLNDRSVTLEKETSNALGLGWRLGFLGSLHASVFKERLEKEYGAKIILTAPTVPYKIVYKDGTEKVITNPDEFPGADQRALNIDHLMEPYVKAIMTIPDEYIGVVMSLCENNRGIQNEMEYLNTGQVLLKYELPLAQLVEDFFGKLKGATKGYASLDYEDSGYKKSDIVKMELCVSGIPQDALSQVMHRSQVQSRGKEYVARFKEYLKSQLFEVAIQAKVNNKVVARETIKAKRKDVTQRLHAADISRRKKLLERQKEGKKQMKASGRVHINHEAYQAFLRRSD.

One can recognise a tr-type G domain in the interval 63–246; sequence SNYRNFSIVA…SIINNIPPPQ (184 aa). GTP-binding positions include 72-79, 139-143, and 193-196; these read AHVDHGKS, DTPGH, and NKID.

The protein belongs to the TRAFAC class translation factor GTPase superfamily. Classic translation factor GTPase family. LepA subfamily.

The protein resides in the mitochondrion inner membrane. The enzyme catalyses GTP + H2O = GDP + phosphate + H(+). In terms of biological role, promotes mitochondrial protein synthesis. May act as a fidelity factor of the translation reaction, by catalyzing a one-codon backward translocation of tRNAs on improperly translocated ribosomes. Binds to mitochondrial ribosomes in a GTP-dependent manner. This Clavispora lusitaniae (strain ATCC 42720) (Yeast) protein is Translation factor GUF1, mitochondrial.